The chain runs to 170 residues: uncharacterized protein (170 aa).

The protein localises to the mitochondrion. This is an uncharacterized protein from Arabidopsis thaliana (Mouse-ear cress).